The sequence spans 152 residues: Venom protein family 1 protein 2 (152 aa).

Residues 1 to 21 (MAKLVFISFLVASFCLIGCFG) form the signal peptide. Cysteine 70 and cysteine 150 form a disulfide bridge.

It belongs to the insect vpf1 family. In terms of tissue distribution, expressed by the venom gland (posterior main gland) (at protein level).

It is found in the secreted. The protein is Venom protein family 1 protein 2 of Platymeris rhadamanthus (Red spot assassin bug).